A 377-amino-acid polypeptide reads, in one-letter code: 3-dehydroquinate synthase (377 aa).

Residues 113 to 117 (GVIGD), 137 to 138 (TT), lysine 150, and lysine 159 each bind NAD(+). The Zn(2+) site is built by glutamate 192, histidine 254, and histidine 273.

It belongs to the sugar phosphate cyclases superfamily. Dehydroquinate synthase family. The cofactor is Co(2+). Requires Zn(2+) as cofactor. NAD(+) is required as a cofactor.

It is found in the cytoplasm. The catalysed reaction is 7-phospho-2-dehydro-3-deoxy-D-arabino-heptonate = 3-dehydroquinate + phosphate. It functions in the pathway metabolic intermediate biosynthesis; chorismate biosynthesis; chorismate from D-erythrose 4-phosphate and phosphoenolpyruvate: step 2/7. Catalyzes the conversion of 3-deoxy-D-arabino-heptulosonate 7-phosphate (DAHP) to dehydroquinate (DHQ). This is 3-dehydroquinate synthase from Bartonella bacilliformis (strain ATCC 35685 / KC583 / Herrer 020/F12,63).